Here is a 389-residue protein sequence, read N- to C-terminus: uncharacterized protein (389 aa).

Positions 1–23 are cleaved as a signal peptide; it reads MHFAKLGAIGLLGSIICAYAASA.

It belongs to the IUNH family.

It localises to the endoplasmic reticulum lumen. This is an uncharacterized protein from Schizosaccharomyces pombe (strain 972 / ATCC 24843) (Fission yeast).